A 304-amino-acid chain; its full sequence is Energy-coupling factor transporter ATP-binding protein EcfA2 (304 aa).

One can recognise an ABC transporter domain in the interval 3–261 (IIVKNISYIY…EKFLVENKLK (259 aa)). 40-47 (GSTGSGKT) lines the ATP pocket.

Belongs to the ABC transporter superfamily. Energy-coupling factor EcfA family. As to quaternary structure, forms a stable energy-coupling factor (ECF) transporter complex composed of 2 membrane-embedded substrate-binding proteins (S component), 2 ATP-binding proteins (A component) and 2 transmembrane proteins (T component).

It is found in the cell membrane. In terms of biological role, ATP-binding (A) component of a common energy-coupling factor (ECF) ABC-transporter complex. Unlike classic ABC transporters this ECF transporter provides the energy necessary to transport a number of different substrates. The polypeptide is Energy-coupling factor transporter ATP-binding protein EcfA2 (Mycoplasmopsis pulmonis (strain UAB CTIP) (Mycoplasma pulmonis)).